The primary structure comprises 498 residues: MRIDPTTSGSGVSTLEKKNPGRVVQIIGPVLDVAFPPGKMPNIYNALVVQGRDSVGQPINVACEVQQLLGNNRVRAVAMSATEGLTRGMEVIDTGAPISVPVGGATLGRIFNVLGAAVDNLGPVDTSTTSPIHRSAPAFIQLDTKLSIFETGIKVVDLLAPYRRGGKIGLFGGAGVGKTVLIMELINNIAKAHGGVSVFGGVGERTREGNDLYMEMKESGVINEENIAESKVALVYGQMNEPPGARMRVGLTALTMAEYFRDVNEQDVLLFIDNIFRFVQAGSEVSALLGRMPSAVGYQPTLSTEMGSLQERITSTKEGSITSIQAVYVPADDLTDPAPATTFAHLDATTVLSRGLAAKGIYPAVDPLDSTSTMLQPRIVGEEHYETAQRVKQTLQRYKELQDIIAILGLDELSEEDRLLVARARKIERFLSQPFFVAEVFTGSPGKYVGLAETIRGFQLILSGELDGLPEQAFYLVGNIDEATAKAMKLEMESNLKK.

172-179 contacts ATP; that stretch reads GGAGVGKT.

The protein belongs to the ATPase alpha/beta chains family. As to quaternary structure, F-type ATPases have 2 components, CF(1) - the catalytic core - and CF(0) - the membrane proton channel. CF(1) has five subunits: alpha(3), beta(3), gamma(1), delta(1), epsilon(1). CF(0) has four main subunits: a(1), b(1), b'(1) and c(9-12).

The protein localises to the plastid. It localises to the chloroplast thylakoid membrane. It catalyses the reaction ATP + H2O + 4 H(+)(in) = ADP + phosphate + 5 H(+)(out). Produces ATP from ADP in the presence of a proton gradient across the membrane. The catalytic sites are hosted primarily by the beta subunits. In Nicotiana rustica (Aztec tobacco), this protein is ATP synthase subunit beta, chloroplastic.